The chain runs to 672 residues: DNA ligase (672 aa).

NAD(+) is bound by residues 35 to 39 (DAEYD), 84 to 85 (SL), and glutamate 116. The active-site N6-AMP-lysine intermediate is lysine 118. 4 residues coordinate NAD(+): arginine 139, glutamate 179, lysine 295, and lysine 319. Residues cysteine 413, cysteine 416, cysteine 431, and cysteine 436 each coordinate Zn(2+). The 80-residue stretch at 593 to 672 (PRSAPLTGKT…EEFLRLAGKI (80 aa)) folds into the BRCT domain.

The protein belongs to the NAD-dependent DNA ligase family. LigA subfamily. Mg(2+) is required as a cofactor. Requires Mn(2+) as cofactor.

The catalysed reaction is NAD(+) + (deoxyribonucleotide)n-3'-hydroxyl + 5'-phospho-(deoxyribonucleotide)m = (deoxyribonucleotide)n+m + AMP + beta-nicotinamide D-nucleotide.. Its function is as follows. DNA ligase that catalyzes the formation of phosphodiester linkages between 5'-phosphoryl and 3'-hydroxyl groups in double-stranded DNA using NAD as a coenzyme and as the energy source for the reaction. It is essential for DNA replication and repair of damaged DNA. The protein is DNA ligase of Syntrophus aciditrophicus (strain SB).